Consider the following 383-residue polypeptide: Heme chaperone HemW (383 aa).

The region spanning 1–241 is the Radical SAM core domain; sequence MPKLPPLSLY…LTMAGYQQYE (241 aa). Tyr10 lines the S-adenosyl-L-methionine pocket. [4Fe-4S] cluster is bound by residues Cys16, Cys20, and Cys23. Residues Gly70, 71–72, Glu103, Gln130, Arg142, and Asp167 each bind S-adenosyl-L-methionine; that span reads GT.

The protein belongs to the anaerobic coproporphyrinogen-III oxidase family. HemW subfamily. The cofactor is [4Fe-4S] cluster.

The protein resides in the cytoplasm. In terms of biological role, probably acts as a heme chaperone, transferring heme to an unknown acceptor. Binds one molecule of heme per monomer, possibly covalently. Binds 1 [4Fe-4S] cluster. The cluster is coordinated with 3 cysteines and an exchangeable S-adenosyl-L-methionine. The protein is Heme chaperone HemW of Haemophilus influenzae (strain ATCC 51907 / DSM 11121 / KW20 / Rd).